Here is a 283-residue protein sequence, read N- to C-terminus: Pantothenate synthetase (283 aa).

30-37 (MGCLHEGH) contributes to the ATP binding site. His37 functions as the Proton donor in the catalytic mechanism. Gln61 is a (R)-pantoate binding site. Gln61 is a binding site for beta-alanine. 147-150 (GQKD) provides a ligand contact to ATP. Position 153 (Gln153) interacts with (R)-pantoate. ATP contacts are provided by residues Val176 and 184-187 (KSSR).

It belongs to the pantothenate synthetase family. In terms of assembly, homodimer.

Its subcellular location is the cytoplasm. It carries out the reaction (R)-pantoate + beta-alanine + ATP = (R)-pantothenate + AMP + diphosphate + H(+). It participates in cofactor biosynthesis; (R)-pantothenate biosynthesis; (R)-pantothenate from (R)-pantoate and beta-alanine: step 1/1. In terms of biological role, catalyzes the condensation of pantoate with beta-alanine in an ATP-dependent reaction via a pantoyl-adenylate intermediate. In Clostridium novyi (strain NT), this protein is Pantothenate synthetase.